Here is a 366-residue protein sequence, read N- to C-terminus: Aminomethyltransferase (366 aa).

It belongs to the GcvT family. The glycine cleavage system is composed of four proteins: P, T, L and H.

The enzyme catalyses N(6)-[(R)-S(8)-aminomethyldihydrolipoyl]-L-lysyl-[protein] + (6S)-5,6,7,8-tetrahydrofolate = N(6)-[(R)-dihydrolipoyl]-L-lysyl-[protein] + (6R)-5,10-methylene-5,6,7,8-tetrahydrofolate + NH4(+). In terms of biological role, the glycine cleavage system catalyzes the degradation of glycine. The protein is Aminomethyltransferase of Bacillus cereus (strain ATCC 10987 / NRS 248).